The sequence spans 62 residues: Large ribosomal subunit protein eL24 (62 aa).

Zn(2+) contacts are provided by C6, C9, C32, and C36. Residues C6–C36 form a C4-type zinc finger.

It belongs to the eukaryotic ribosomal protein eL24 family. As to quaternary structure, part of the 50S ribosomal subunit. Forms a cluster with proteins L3 and L14. Zn(2+) serves as cofactor.

Binds to the 23S rRNA. This Methanococcus maripaludis (strain C5 / ATCC BAA-1333) protein is Large ribosomal subunit protein eL24.